Reading from the N-terminus, the 197-residue chain is Small ribosomal subunit protein uS5 (197 aa).

The span at 1 to 17 (MAERENRGRGRGRNREE) shows a compositional bias: basic and acidic residues. Disordered regions lie at residues 1-22 (MAER…TPEF) and 158-197 (NESS…SEEA). The S5 DRBM domain occupies 22–85 (FADRLVAINR…EQAKRQLIRV (64 aa)). Positions 172–186 (KVADILPKRDDHPQI) are enriched in basic and acidic residues.

This sequence belongs to the universal ribosomal protein uS5 family. As to quaternary structure, part of the 30S ribosomal subunit. Contacts proteins S4 and S8.

In terms of biological role, with S4 and S12 plays an important role in translational accuracy. Its function is as follows. Located at the back of the 30S subunit body where it stabilizes the conformation of the head with respect to the body. The chain is Small ribosomal subunit protein uS5 from Jannaschia sp. (strain CCS1).